Consider the following 119-residue polypeptide: Large ribosomal subunit protein bL19 (119 aa).

Belongs to the bacterial ribosomal protein bL19 family.

Its function is as follows. This protein is located at the 30S-50S ribosomal subunit interface and may play a role in the structure and function of the aminoacyl-tRNA binding site. This is Large ribosomal subunit protein bL19 from Treponema denticola (strain ATCC 35405 / DSM 14222 / CIP 103919 / JCM 8153 / KCTC 15104).